The following is a 204-amino-acid chain: N-(5'-phosphoribosyl)anthranilate isomerase (204 aa).

The protein belongs to the TrpF family.

The catalysed reaction is N-(5-phospho-beta-D-ribosyl)anthranilate = 1-(2-carboxyphenylamino)-1-deoxy-D-ribulose 5-phosphate. It participates in amino-acid biosynthesis; L-tryptophan biosynthesis; L-tryptophan from chorismate: step 3/5. This is N-(5'-phosphoribosyl)anthranilate isomerase (trpF) from Saccharolobus solfataricus (strain ATCC 35092 / DSM 1617 / JCM 11322 / P2) (Sulfolobus solfataricus).